Reading from the N-terminus, the 606-residue chain is Aspartate--tRNA(Asp/Asn) ligase (606 aa).

Glu-187 contacts L-aspartate. The segment at 211–214 (QQFK) is aspartate. Residues Arg-233 and His-461 each contribute to the L-aspartate site. Position 233-235 (233-235 (RDE)) interacts with ATP. Glu-495 lines the ATP pocket. Residue Arg-502 participates in L-aspartate binding. 547 to 550 (GLDR) is an ATP binding site.

The protein belongs to the class-II aminoacyl-tRNA synthetase family. Type 1 subfamily. Homodimer.

The protein localises to the cytoplasm. It catalyses the reaction tRNA(Asx) + L-aspartate + ATP = L-aspartyl-tRNA(Asx) + AMP + diphosphate. In terms of biological role, aspartyl-tRNA synthetase with relaxed tRNA specificity since it is able to aspartylate not only its cognate tRNA(Asp) but also tRNA(Asn). Reaction proceeds in two steps: L-aspartate is first activated by ATP to form Asp-AMP and then transferred to the acceptor end of tRNA(Asp/Asn). The chain is Aspartate--tRNA(Asp/Asn) ligase from Chlorobium phaeobacteroides (strain DSM 266 / SMG 266 / 2430).